A 633-amino-acid polypeptide reads, in one-letter code: Probable potassium transport system protein Kup 3 (633 aa).

The next 11 helical transmembrane spans lie at 61 to 81 (LVSL…VLFL), 107 to 127 (PVLM…DAMI), 143 to 163 (VAPA…LLLF), 173 to 193 (VSVF…AAGV), 211 to 231 (AIGF…AIFL), 255 to 275 (WFAV…ALVL), 287 to 307 (LMFP…GTII), 345 to 365 (IYLP…MLMF), 371 to 391 (LAPA…ILAF), 402 to 422 (ALTA…FLGA), and 427 to 447 (IHHG…MMWT).

This sequence belongs to the HAK/KUP transporter (TC 2.A.72) family.

Its subcellular location is the cell inner membrane. It carries out the reaction K(+)(in) + H(+)(in) = K(+)(out) + H(+)(out). Functionally, transport of potassium into the cell. Likely operates as a K(+):H(+) symporter. The protein is Probable potassium transport system protein Kup 3 of Sinorhizobium medicae (strain WSM419) (Ensifer medicae).